We begin with the raw amino-acid sequence, 1382 residues long: DNA-directed RNA polymerase subunit beta'' (1382 aa).

Cysteine 224, cysteine 294, cysteine 301, and cysteine 304 together coordinate Zn(2+).

Belongs to the RNA polymerase beta' chain family. RpoC2 subfamily. In plastids the minimal PEP RNA polymerase catalytic core is composed of four subunits: alpha, beta, beta', and beta''. When a (nuclear-encoded) sigma factor is associated with the core the holoenzyme is formed, which can initiate transcription. Zn(2+) is required as a cofactor.

Its subcellular location is the plastid. The protein resides in the chloroplast. The catalysed reaction is RNA(n) + a ribonucleoside 5'-triphosphate = RNA(n+1) + diphosphate. In terms of biological role, DNA-dependent RNA polymerase catalyzes the transcription of DNA into RNA using the four ribonucleoside triphosphates as substrates. The polypeptide is DNA-directed RNA polymerase subunit beta'' (Dioscorea elephantipes (Elephant's foot yam)).